The primary structure comprises 413 residues: S-adenosylmethionine synthase (413 aa).

H15 provides a ligand contact to ATP. D17 contributes to the Mg(2+) binding site. E43 is a K(+) binding site. Positions 56 and 100 each coordinate L-methionine. The tract at residues 100–110 is flexible loop; that stretch reads QSPDISQGVNE. ATP contacts are provided by residues 171-173, 248-249, D257, 263-264, A280, and K284; these read DGK, KF, and RK. Residue D257 participates in L-methionine binding. K288 contributes to the L-methionine binding site.

The protein belongs to the AdoMet synthase family. Homotetramer; dimer of dimers. Mg(2+) serves as cofactor. Requires K(+) as cofactor.

Its subcellular location is the cytoplasm. The enzyme catalyses L-methionine + ATP + H2O = S-adenosyl-L-methionine + phosphate + diphosphate. It functions in the pathway amino-acid biosynthesis; S-adenosyl-L-methionine biosynthesis; S-adenosyl-L-methionine from L-methionine: step 1/1. In terms of biological role, catalyzes the formation of S-adenosylmethionine (AdoMet) from methionine and ATP. The overall synthetic reaction is composed of two sequential steps, AdoMet formation and the subsequent tripolyphosphate hydrolysis which occurs prior to release of AdoMet from the enzyme. This chain is S-adenosylmethionine synthase, found in Prochlorococcus marinus (strain MIT 9215).